Consider the following 104-residue polypeptide: Alpha-amylase inhibitor HOE-467A (104 aa).

The first 30 residues, 1–30 (MRVRALRLAALVGAGAALALSPLAAGPASA), serve as a signal peptide directing secretion. Intrachain disulfides connect cysteine 41–cysteine 57 and cysteine 75–cysteine 103.

Its function is as follows. Inhibits mammalian alpha-amylases specifically but has no action on plant and microbial alpha-amylases. Forms a tight stoichiometric 1:1 complex with alpha-amylase. The protein is Alpha-amylase inhibitor HOE-467A of Streptomyces tendae.